Here is a 501-residue protein sequence, read N- to C-terminus: Lysine--tRNA ligase (501 aa).

Residues Glu411 and Glu418 each contribute to the Mg(2+) site.

Belongs to the class-II aminoacyl-tRNA synthetase family. Homodimer. Mg(2+) serves as cofactor.

It localises to the cytoplasm. It carries out the reaction tRNA(Lys) + L-lysine + ATP = L-lysyl-tRNA(Lys) + AMP + diphosphate. In Aliivibrio fischeri (strain ATCC 700601 / ES114) (Vibrio fischeri), this protein is Lysine--tRNA ligase.